The following is a 448-amino-acid chain: Phosphoglucosamine mutase (448 aa).

The Phosphoserine intermediate role is filled by Ser102. Ser102, Asp242, Asp244, and Asp246 together coordinate Mg(2+). Ser102 is modified (phosphoserine).

It belongs to the phosphohexose mutase family. Requires Mg(2+) as cofactor. In terms of processing, activated by phosphorylation.

The enzyme catalyses alpha-D-glucosamine 1-phosphate = D-glucosamine 6-phosphate. Functionally, catalyzes the conversion of glucosamine-6-phosphate to glucosamine-1-phosphate. The chain is Phosphoglucosamine mutase from Brevibacillus brevis (strain 47 / JCM 6285 / NBRC 100599).